The sequence spans 472 residues: Endoplasmic reticulum oxidoreductin-2 (472 aa).

The signal sequence occupies residues 1–37 (MAETDVGSVKGKEKGSGKRWILLIGAIAAVLLAVVVA). Asn-44 carries an N-linked (GlcNAc...) asparagine glycan. 6 disulfide bridges follow: Cys-55-Cys-74, Cys-57-Cys-72, Cys-111-Cys-371, Cys-120-Cys-125, Cys-221-Cys-230, and Cys-374-Cys-377. Residues Arg-200, Thr-202, and Trp-213 each contribute to the FAD site. Residues Ser-241 and His-244 each coordinate FAD. Asn-267 carries N-linked (GlcNAc...) asparagine glycosylation. FAD contacts are provided by Arg-274 and Arg-281. N-linked (GlcNAc...) asparagine glycosylation is present at Asn-364.

Belongs to the EROs family. In terms of assembly, may function both as a monomer and a homodimer. It depends on FAD as a cofactor. In terms of processing, N-glycosylated.

The protein localises to the endoplasmic reticulum membrane. In terms of biological role, essential oxidoreductase that oxidizes proteins in the endoplasmic reticulum to produce disulfide bonds. Acts by oxidizing directly PDI isomerase through a direct disulfide exchange. Does not act as a direct oxidant of folding substrate, but relies on PDI to transfer oxidizing equivalent. Does not oxidize all PDI related proteins, suggesting that it can discriminate between PDI and related proteins. Its reoxidation probably involves electron transfer to molecular oxygen via FAD. Acts independently of glutathione. May be responsible for a significant proportion of reactive oxygen species (ROS) in the cell, thereby being a source of oxidative stress. The protein is Endoplasmic reticulum oxidoreductin-2 (AERO2) of Arabidopsis thaliana (Mouse-ear cress).